The following is a 212-amino-acid chain: Cytidylate kinase (212 aa).

An ATP-binding site is contributed by 9–17; that stretch reads GPAAAGKGT.

Belongs to the cytidylate kinase family. Type 1 subfamily.

The protein localises to the cytoplasm. It carries out the reaction CMP + ATP = CDP + ADP. It catalyses the reaction dCMP + ATP = dCDP + ADP. The protein is Cytidylate kinase of Rhizobium meliloti (strain 1021) (Ensifer meliloti).